The primary structure comprises 512 residues: MTTSPLHTRFGGIAELRAALAGRQVSARELARSALDAAQAAGDLNTFLHIDPDLTLAQADAADAALAAGTAGPLAGVPIAHKDAFVTRGWRTTAGSKMLEGYASPFDATVVQRLQAAGAVSLGKLNCDEFAMGSANENSAYGPVRNPWDPNAVPGGSSGGSAAAVAARLVAAATGTDTGGSVRQPAALCGVSGIKPTYGTVSRYGIVAFGSSLDQAGPLAPSSRDLLELLDPMSGFDPQDATSLETCDGAPNAPGRIRAAYDAAQAACDAAGSQPLKGLRIGVPQEYFGAGLAPDVAAAVEAALAQFEALGAQRVAVSLPRTELAIPAYYVIAPAEASSNLARYDGVRYGHRAAEYADLNQMIARSRAEGFGDEVKRRILIGTYVLSHGYYDAYYLQAQRVRRLIAQDFQRAYAGQCDVIMGPVAPTVAKNIGDNRDDPTADWLADVYTLGVSLAGLPAMSIPAGFGNGGRPVGLQIIGNYFDEGRLLAIADRYQQVTDWHRRVPGQQGTEQ.

Active-site charge relay system residues include Lys-82 and Ser-157. Ser-181 serves as the catalytic Acyl-ester intermediate.

Belongs to the amidase family. GatA subfamily. As to quaternary structure, heterotrimer of A, B and C subunits.

It catalyses the reaction L-glutamyl-tRNA(Gln) + L-glutamine + ATP + H2O = L-glutaminyl-tRNA(Gln) + L-glutamate + ADP + phosphate + H(+). Functionally, allows the formation of correctly charged Gln-tRNA(Gln) through the transamidation of misacylated Glu-tRNA(Gln) in organisms which lack glutaminyl-tRNA synthetase. The reaction takes place in the presence of glutamine and ATP through an activated gamma-phospho-Glu-tRNA(Gln). This Bordetella petrii (strain ATCC BAA-461 / DSM 12804 / CCUG 43448) protein is Glutamyl-tRNA(Gln) amidotransferase subunit A.